A 722-amino-acid chain; its full sequence is MEPQRKHSTALHTCHPCRRTIPYRIYAVFHTCGIIALMYHHVHSIVNANNTLITCLLLLSDIVLAFMWATTTSLRLNPIHRTEYPEKYAAKPEDFPKLDVFICTADPYKEPPMMVVNTALSVMAYEYPSHKISVYVSDDGGSSLTLFALMEAAKFSKHWLPFCKNNNVQDRSPEVYFSSKSHSSSDEAENLKMMYEDMKSRVEHVVESGKVETAFIACDQFSCVFDLWTDKFTRHDHPTIIMVLQHNETEMMPNLIYVSREKSKVSPHHFKAGALNTLLRVSAVMTNSPIILTLDCDMYSNNPTTPLHALCYLSDPKINFDLGFVQFPQKFQGVNKNDIYASELKRPFDINTVGFDGLMGPVHMGTGCFFNRRAFYGPPTTLILPEIETFGPNRIADKPIKAQDILALAHDVAGCNYECNTNWGSKIGFRYGSLVEDYFTGFMLHCEGWRSIFCSPTKAAFYGDSPKCLTDVIGQQIRWSVGLLEVAFSRYNPLTYGIKPLSLLMSLGYCHYAFWPFWCIPLVVYGILPQVALIHGVSVFPKASDPWFWLYIILFLGGYAQDLSDFLLEGGTYRKWWNDQRMWMVRGLSSFFFGFTEFTLKTLNLSTQGYNVTSKSNDDNEQMKRYEQEIFDFGPSSSMFLPITTVAIMNLLAFMRGLYGIFTWGEGPVLELMLASFAVVNCLPIYEAMVLRIDDGKLPKRICFLAGLLSFVLTGSGYFFLK.

The next 2 helical transmembrane spans lie at 25-45 (IYAVFHTCGIIALMYHHVHSI) and 51-71 (TLITCLLLLSDIVLAFMWATT). Active-site residues include Asp139 and Asp437. 6 consecutive transmembrane segments (helical) span residues 514 to 534 (FWPFWCIPLVVYGILPQVALI), 548 to 568 (FWLYIILFLGGYAQDLSDFLL), 583 to 605 (WMVRGLSSFFFGFTEFTLKTLNL), 635 to 655 (PSSSMFLPITTVAIMNLLAFM), 660 to 680 (GIFTWGEGPVLELMLASFAVV), and 702 to 722 (ICFLAGLLSFVLTGSGYFFLK).

This sequence belongs to the glycosyltransferase 2 family. Plant cellulose synthase-like G subfamily. In terms of tissue distribution, expressed in young seedlings, primarily in the vascular tissue.

It localises to the golgi apparatus membrane. Thought to be a Golgi-localized beta-glycan synthase that polymerize the backbones of noncellulosic polysaccharides (hemicelluloses) of plant cell wall. In Arabidopsis thaliana (Mouse-ear cress), this protein is Cellulose synthase-like protein G2 (CSLG2).